Reading from the N-terminus, the 288-residue chain is ATP synthase gamma chain (288 aa).

Belongs to the ATPase gamma chain family. As to quaternary structure, F-type ATPases have 2 components, CF(1) - the catalytic core - and CF(0) - the membrane proton channel. CF(1) has five subunits: alpha(3), beta(3), gamma(1), delta(1), epsilon(1). CF(0) has three main subunits: a, b and c.

The protein resides in the cell inner membrane. In terms of biological role, produces ATP from ADP in the presence of a proton gradient across the membrane. The gamma chain is believed to be important in regulating ATPase activity and the flow of protons through the CF(0) complex. In Rickettsia bellii (strain RML369-C), this protein is ATP synthase gamma chain.